The following is a 138-amino-acid chain: Putative pre-16S rRNA nuclease (138 aa).

Belongs to the YqgF nuclease family.

Its subcellular location is the cytoplasm. Its function is as follows. Could be a nuclease involved in processing of the 5'-end of pre-16S rRNA. This is Putative pre-16S rRNA nuclease from Klebsiella pneumoniae (strain 342).